A 375-amino-acid polypeptide reads, in one-letter code: Arabinose metabolism transcriptional repressor (375 aa).

The HTH gntR-type domain occupies 1–70 (METKYNFVKQ…QGAGTFCADR (70 aa)). A DNA-binding region (H-T-H motif) is located at residues 30 to 49 (ENELMKEYNVSRHTVRKAID).

Its subcellular location is the cytoplasm. Transcriptional repressor of the arabinose utilization genes. The protein is Arabinose metabolism transcriptional repressor (araR) of Halalkalibacterium halodurans (strain ATCC BAA-125 / DSM 18197 / FERM 7344 / JCM 9153 / C-125) (Bacillus halodurans).